We begin with the raw amino-acid sequence, 95 residues long: UPF0235 protein Adeh_1087 (95 aa).

The protein belongs to the UPF0235 family.

The protein is UPF0235 protein Adeh_1087 of Anaeromyxobacter dehalogenans (strain 2CP-C).